A 591-amino-acid chain; its full sequence is Parathyroid hormone/parathyroid hormone-related peptide receptor (591 aa).

The N-terminal stretch at 1–26 is a signal peptide; sequence MGAARIAPSLALLLCCPVLSSAYALV. Residues 27 to 188 are Extracellular-facing; sequence DADDVFTKEE…REREVFDRLG (162 aa). 3 disulfide bridges follow: Cys-48–Cys-117, Cys-108–Cys-148, and Cys-131–Cys-170. The disordered stretch occupies residues 67–104; that stretch reads KGWTPASTSGKPRKEKASGKFYPESKENKDVPTGSRRR. The span at 81-96 shows a compositional bias: basic and acidic residues; sequence EKASGKFYPESKENKD. 4 N-linked (GlcNAc...) asparagine glycosylation sites follow: Asn-151, Asn-161, Asn-166, and Asn-176. Residues 189-212 form a helical membrane-spanning segment; sequence MIYTVGYSMSLASLTVAVLILAYF. Residues 213–219 lie on the Cytoplasmic side of the membrane; that stretch reads RRLHCTR. Residues 220–239 traverse the membrane as a helical segment; the sequence is NYIHMHMFLSFMLRAASIFV. Residues 240 to 282 are Extracellular-facing; that stretch reads KDAVLYSGFTLDEAERLTEEELHIIAQVPPPPAAAAVGYAGCR. The helical transmembrane segment at 283–306 threads the bilayer; the sequence is VAVTFFLYFLATNYYWILVEGLYL. Over 307 to 320 the chain is Cytoplasmic; it reads HSLIFMAFFSEKKY. The chain crosses the membrane as a helical span at residues 321 to 342; the sequence is LWGFTIFGWGLPAVFVAVWVGV. The Extracellular portion of the chain corresponds to 343 to 361; that stretch reads RATLANTGCWDLSSGHKKW. The helical transmembrane segment at 362–382 threads the bilayer; that stretch reads IIQVPILASVVLNFILFINII. Residues 383–409 are Cytoplasmic-facing; it reads RVLATKLRETNAGRCDTRQQYRKLLRS. The helical transmembrane segment at 410–428 threads the bilayer; it reads TLVLVPLFGVHYTVFMALP. Topologically, residues 429 to 440 are extracellular; the sequence is YTEVSGTLWQIQ. The chain crosses the membrane as a helical span at residues 441 to 463; the sequence is MHYEMLFNSFQGFFVAIIYCFCN. Residues 464–591 lie on the Cytoplasmic side of the membrane; sequence GEVQAEIRKS…LLQEEWETVM (128 aa). The Important for interaction with G proteins signature appears at 474-477; that stretch reads WSRW. A disordered region spans residues 516–544; sequence LPLSPRLPPATTNGHSQLPGHAKPGAPAT.

This sequence belongs to the G-protein coupled receptor 2 family. In terms of assembly, homodimer in the absence of bound ligand. Peptide hormone binding leads to dissociation of the homodimer. Post-translationally, N-glycosylated.

The protein localises to the cell membrane. G-protein-coupled receptor for parathyroid hormone (PTH) and for parathyroid hormone-related peptide (PTHLH). Ligand binding causes a conformation change that triggers signaling via guanine nucleotide-binding proteins (G proteins) and modulates the activity of downstream effectors, such as adenylate cyclase (cAMP). PTH1R is coupled to G(s) G alpha proteins and mediates activation of adenylate cyclase activity. PTHLH dissociates from PTH1R more rapidly than PTH; as consequence, the cAMP response induced by PTHLH decays faster than the response induced by PTH. In Rattus norvegicus (Rat), this protein is Parathyroid hormone/parathyroid hormone-related peptide receptor (Pth1r).